We begin with the raw amino-acid sequence, 233 residues long: uncharacterized protein (233 aa).

Belongs to the RHS family.

This is an uncharacterized protein from Escherichia coli (strain K12).